The primary structure comprises 451 residues: Phosphoglucosamine mutase (451 aa).

S101 functions as the Phosphoserine intermediate in the catalytic mechanism. Mg(2+) contacts are provided by S101, D240, D242, and D244. Phosphoserine is present on S101.

Belongs to the phosphohexose mutase family. The cofactor is Mg(2+). Post-translationally, activated by phosphorylation.

The catalysed reaction is alpha-D-glucosamine 1-phosphate = D-glucosamine 6-phosphate. Its function is as follows. Catalyzes the conversion of glucosamine-6-phosphate to glucosamine-1-phosphate. This Nitrosococcus oceani (strain ATCC 19707 / BCRC 17464 / JCM 30415 / NCIMB 11848 / C-107) protein is Phosphoglucosamine mutase.